The primary structure comprises 209 residues: Prolactin (209 aa).

Positions 1–24 (MAQRFKGSNLFLTALLCLASQGHA) are cleaved as a signal peptide. 2 disulfides stabilise this stretch: Cys70–Cys184 and Cys201–Cys209.

This sequence belongs to the somatotropin/prolactin family.

It is found in the secreted. This Anguilla japonica (Japanese eel) protein is Prolactin (prl).